A 200-amino-acid polypeptide reads, in one-letter code: Nucleoplasmin (200 aa).

The residue at position 2 (A2) is an N-acetylalanine. S3 is subject to Phosphoserine. The residue at position 4 (T4) is a Phosphothreonine. Position 6 is a phosphoserine (S6). T8 carries the phosphothreonine modification. The interval 35–39 (EDDEE) is acidic tract A1. The segment covering 123–148 (DYSWAEEEDEGEAEGEEEEEEEEDQE) has biased composition (acidic residues). Residues 123 to 200 (DYSWAEEEDE…GRGRKPAAKK (78 aa)) form a disordered region. The tract at residues 128 to 148 (EEEDEGEAEGEEEEEEEEDQE) is acidic tract A2. Position 149 is a phosphoserine (S149). Over residues 153-170 (AVKRPAATKKAGQAKKKK) the composition is skewed to basic residues. The Bipartite nuclear localization signal motif lies at 155–170 (KRPAATKKAGQAKKKK). Positions 174 to 176 (EDE) are acidic tract A3. 3 positions are modified to phosphoserine: S177, S178, and S182. Residues 185 to 200 (KKGKGAGRGRKPAAKK) show a composition bias toward basic residues. R192 carries the omega-N-methylarginine; by PRMT5; alternate modification. R192 carries the post-translational modification Symmetric dimethylarginine; by PRMT5; alternate.

It belongs to the nucleoplasmin family. As to quaternary structure, homopentamer, when bound to H2A-H2B dimers only. Homodecamer of two stacked pentamers, when bound to H2A-H2B dimers and H3-H4 tetramers simultaneously. Interacts with the heterotetramer formed by wdr77 and prmt5. In terms of processing, activated by phosphorylation of multiple serine/threonine residues, along both core and tail domains. The level of phosphorylation gradually increases during egg maturation, reaching an average of 7-10 phosphates per monomer, so that at the time of fertilization the activity of the protein is maximum. Methylated by prmt5, yielding both monomethylated and symmetrically dimethylated Arg-192.

The protein localises to the nucleus. Acts as a chaperone for histones, such as histone H2A-H2B, and thus regulates the assembly of nucleosome cores. Involved in chromatin remodeling, especially during fertilization and early embryonic development. May be involved in sperm chromatin decondensation during fertilization. This chain is Nucleoplasmin, found in Xenopus laevis (African clawed frog).